The chain runs to 409 residues: NADH-quinone oxidoreductase subunit D (409 aa).

The protein belongs to the complex I 49 kDa subunit family. As to quaternary structure, NDH-1 is composed of 14 different subunits. Subunits NuoB, C, D, E, F, and G constitute the peripheral sector of the complex.

It localises to the cell inner membrane. The catalysed reaction is a quinone + NADH + 5 H(+)(in) = a quinol + NAD(+) + 4 H(+)(out). Its function is as follows. NDH-1 shuttles electrons from NADH, via FMN and iron-sulfur (Fe-S) centers, to quinones in the respiratory chain. The immediate electron acceptor for the enzyme in this species is believed to be ubiquinone. Couples the redox reaction to proton translocation (for every two electrons transferred, four hydrogen ions are translocated across the cytoplasmic membrane), and thus conserves the redox energy in a proton gradient. This chain is NADH-quinone oxidoreductase subunit D, found in Helicobacter acinonychis (strain Sheeba).